The sequence spans 419 residues: MAPGALLVTSQNGRTSPLYDSDGYVPAPAALVVGGEVNYRGYHHAEWWVGNAKQVAQFYITRMGFEPVAHKGLETGSRFFASHVVQNNGVRFVFTSPVRSSARQTLKAAPLADQARLDEMYDHLDKHGDGVKDVAFEVDDVLAVYENAVANGAESVSSPHTDSCDEGDVISAAIKTYGDTTHTFIQRTTYTGPFLPGYRSCTTVDSANKFLPPVNLEAIDHCVGNQDWDEMSDACDFYERCLGFHRFWSVDDKDICTEFSALKSIVMSSPNQVVKMPINEPAHGKKKSQIEEYVDFYNGPGVQHIALRTPNIIEAVSNLRSRGVEFISVPDTYYENMRLRLKAAGMKLEESFDIIQKLNILIDFDEGGYLLQLFTKPLMDRPTVFIEIIQRNNFDGFGAGNFKSLFEAIEREQDLRGNL.

VOC domains are found at residues 41–187 and 218–376; these read GYHH…FIQR and AIDH…LFTK. Fe cation-binding residues include histidine 221, histidine 304, and glutamate 387.

It belongs to the 4HPPD family. Fe cation serves as cofactor.

It catalyses the reaction 3-(4-hydroxyphenyl)pyruvate + O2 = homogentisate + CO2. It functions in the pathway amino-acid degradation; L-phenylalanine degradation; acetoacetate and fumarate from L-phenylalanine: step 3/6. In Zymoseptoria tritici (Speckled leaf blotch fungus), this protein is 4-hydroxyphenylpyruvate dioxygenase (HPPD).